Consider the following 328-residue polypeptide: DNA-directed RNA polymerase subunit alpha (328 aa).

The segment at 1–230 (MNKIKITPSV…QSQMEIFTND (230 aa)) is alpha N-terminal domain (alpha-NTD). Residues 243 to 328 (NSEIFYQPLD…ILKKIEQNKS (86 aa)) are alpha C-terminal domain (alpha-CTD).

This sequence belongs to the RNA polymerase alpha chain family. As to quaternary structure, homodimer. The RNAP catalytic core consists of 2 alpha, 1 beta, 1 beta' and 1 omega subunit. When a sigma factor is associated with the core the holoenzyme is formed, which can initiate transcription.

The catalysed reaction is RNA(n) + a ribonucleoside 5'-triphosphate = RNA(n+1) + diphosphate. Functionally, DNA-dependent RNA polymerase catalyzes the transcription of DNA into RNA using the four ribonucleoside triphosphates as substrates. This chain is DNA-directed RNA polymerase subunit alpha, found in Nitratiruptor sp. (strain SB155-2).